The chain runs to 691 residues: Elongation factor G (691 aa).

The tr-type G domain maps to 6–281; the sequence is SKYRNIGIMA…GVVDFLPSPI (276 aa). Residues 15–22, 79–83, and 133–136 contribute to the GTP site; these read AHIDAGKT, DTPGH, and NKMD.

It belongs to the TRAFAC class translation factor GTPase superfamily. Classic translation factor GTPase family. EF-G/EF-2 subfamily.

The protein localises to the cytoplasm. In terms of biological role, catalyzes the GTP-dependent ribosomal translocation step during translation elongation. During this step, the ribosome changes from the pre-translocational (PRE) to the post-translocational (POST) state as the newly formed A-site-bound peptidyl-tRNA and P-site-bound deacylated tRNA move to the P and E sites, respectively. Catalyzes the coordinated movement of the two tRNA molecules, the mRNA and conformational changes in the ribosome. The chain is Elongation factor G from Wolbachia pipientis wMel.